The following is a 588-amino-acid chain: ATP-dependent lipid A-core flippase (588 aa).

A run of 6 helical transmembrane segments spans residues 23–43 (FWPVLLLGVLANILYSGIDAG), 56–76 (FITIDLDFVKQIPLIVLIGIT), 141–161 (DALTDFIQNICLVIGLLTVMM), 162–182 (VICWQLSLMFLLTIPFVGIIV), 257–277 (LVIAIGIAMIIMAAIHLSTVI), and 278–298 (TISAGSFLAIIAAMLQLIKPM). One can recognise an ABC transmembrane type-1 domain in the interval 28–310 (LLGVLANILY…LTTLNATIQR (283 aa)). Residues 342 to 576 (IEFKHVYHAY…DGHYAQLYKV (235 aa)) form the ABC transporter domain. 375–382 (GHSGSGKT) is an ATP binding site.

It belongs to the ABC transporter superfamily. Lipid exporter (TC 3.A.1.106) family. Homodimer.

It is found in the cell inner membrane. It catalyses the reaction ATP + H2O + lipid A-core oligosaccharideSide 1 = ADP + phosphate + lipid A-core oligosaccharideSide 2.. Functionally, involved in lipopolysaccharide (LPS) biosynthesis. Translocates lipid A-core from the inner to the outer leaflet of the inner membrane. Transmembrane domains (TMD) form a pore in the inner membrane and the ATP-binding domain (NBD) is responsible for energy generation. This is ATP-dependent lipid A-core flippase from Legionella pneumophila (strain Paris).